The following is a 670-amino-acid chain: Beta-fructofuranosidase 1 (670 aa).

The disordered stretch occupies residues 1–40 (MIPAVADPTTLDGGGARRPLLPETDPRGRAAAGAEQKRPP). The Cytoplasmic portion of the chain corresponds to 1–44 (MIPAVADPTTLDGGGARRPLLPETDPRGRAAAGAEQKRPPATPT). Positions 1–112 (MIPAVADPTT…APLLGSGALQ (112 aa)) are cleaved as a propeptide — removed in mature form. The chain crosses the membrane as a helical; Signal-anchor for type II membrane protein span at residues 45–65 (VLTAVVSAVLLLVLVAVTVLA). Over 66–670 (SQHVDGQAGG…RPYPATTTSL (605 aa)) the chain is Lumenal. Substrate-binding positions include 136–139 (WMND), glutamine 155, and tryptophan 163. Residue aspartate 139 is part of the active site. Asparagine 165 is a glycosylation site (N-linked (GlcNAc...) asparagine). Residues 198–199 (WS) and 263–264 (RD) contribute to the substrate site. N-linked (GlcNAc...) asparagine glycosylation occurs at asparagine 275. Substrate is bound by residues glutamate 322 and aspartate 362. Asparagine 518 carries an N-linked (GlcNAc...) asparagine glycan. Cysteines 519 and 567 form a disulfide. N-linked (GlcNAc...) asparagine glycosylation is found at asparagine 595 and asparagine 639.

The protein belongs to the glycosyl hydrolase 32 family. As to quaternary structure, may be present in two forms, a 70 kDa monomer and a heterodimer of the 30 kDa and 38 kDa subunits. The ratio of the levels of the two forms within cells appears to be regulated developmentally.

It is found in the membrane. Its subcellular location is the vacuole lumen. It catalyses the reaction Hydrolysis of terminal non-reducing beta-D-fructofuranoside residues in beta-D-fructofuranosides.. Its pathway is glycan biosynthesis; sucrose metabolism. In Zea mays (Maize), this protein is Beta-fructofuranosidase 1 (IVR1).